Here is a 257-residue protein sequence, read N- to C-terminus: Zinc-finger homeodomain protein 6 (257 aa).

A disordered region spans residues 1–35; the sequence is MEFRGHDEPVDEMGVAYGRTPPSSSSSPAASASAG. Residues 21 to 35 show a composition bias toward low complexity; the sequence is PPSSSSSPAASASAG. A ZF-HD dimerization-type; degenerate zinc finger spans residues 45–93; that stretch reads YHECLRNHAAAMGGHVVDGCGEFMPMPGDAADALKCAACGCHRSFHRKD. Over residues 106-125 the composition is skewed to pro residues; that stretch reads PSPPTPRVPLLMPPPQPQPH. 2 disordered regions span residues 106–182 and 228–257; these read PSPP…TKFT and NNKS…QQQQ. Residues 141 to 155 show a composition bias toward low complexity; the sequence is YHHTPSGSGGTTTES. The segment at residues 174-237 is a DNA-binding region (homeobox); sequence RKRFRTKFTP…NNKSSIGSSS (64 aa). Residues 242 to 257 show a composition bias toward low complexity; the sequence is RRQPQEQQSQQQQQQQ.

Homo- and heterodimer with other ZFHD proteins.

Its subcellular location is the nucleus. In terms of biological role, putative transcription factor. The polypeptide is Zinc-finger homeodomain protein 6 (ZHD6) (Oryza sativa subsp. indica (Rice)).